Here is a 352-residue protein sequence, read N- to C-terminus: Isopentenyl-diphosphate delta-isomerase (352 aa).

6–7 (RK) is a substrate binding site. FMN contacts are provided by residues 63 to 65 (AMT), serine 93, and asparagine 122. Substrate is bound at residue 93 to 95 (SQR). Glutamine 160 provides a ligand contact to substrate. Glutamate 161 contributes to the Mg(2+) binding site. Residues lysine 192, threonine 221, 271 to 273 (GIR), and 292 to 293 (SQ) each bind FMN.

The protein belongs to the IPP isomerase type 2 family. As to quaternary structure, homooctamer. Dimer of tetramers. Requires FMN as cofactor. The cofactor is NADPH. Mg(2+) serves as cofactor.

Its subcellular location is the cytoplasm. The enzyme catalyses isopentenyl diphosphate = dimethylallyl diphosphate. Its function is as follows. Involved in the biosynthesis of isoprenoids. Catalyzes the 1,3-allylic rearrangement of the homoallylic substrate isopentenyl (IPP) to its allylic isomer, dimethylallyl diphosphate (DMAPP). The polypeptide is Isopentenyl-diphosphate delta-isomerase (Pyrobaculum arsenaticum (strain DSM 13514 / JCM 11321 / PZ6)).